A 63-amino-acid polypeptide reads, in one-letter code: MGRIRQTFIKRAGEDLVEKYEDRLTTDFETNKKVIDEVAEIATKRLRNRVAGYVTKKMKKVDA.

This sequence belongs to the eukaryotic ribosomal protein eS17 family.

In Methanococcus aeolicus (strain ATCC BAA-1280 / DSM 17508 / OCM 812 / Nankai-3), this protein is Small ribosomal subunit protein eS17.